The sequence spans 365 residues: Spermine synthase (365 aa).

Alanine 2 carries the post-translational modification N-acetylalanine. Serine 57 is subject to Phosphoserine. The PABS domain occupies 121–361; that stretch reads RYWPTADGRL…ELWVFYTVWK (241 aa). Residue glutamine 147 coordinates S-adenosyl 3-(methylsulfanyl)propylamine. Tyrosine 176 and aspartate 200 together coordinate spermidine. Residues glutamate 219 and 254-255 contribute to the S-adenosyl 3-(methylsulfanyl)propylamine site; that span reads DC. Catalysis depends on aspartate 275, which acts as the Proton acceptor. Spermidine is bound by residues tyrosine 350 and glutamate 352.

The protein belongs to the spermidine/spermine synthase family. In terms of assembly, homodimer. Dimerization is mediated through the N-terminal domain and seems to be required for activity as deletion of the N-terminal domain causes complete loss of activity.

It catalyses the reaction S-adenosyl 3-(methylsulfanyl)propylamine + spermidine = spermine + S-methyl-5'-thioadenosine + H(+). It functions in the pathway amine and polyamine biosynthesis; spermine biosynthesis; spermine from spermidine: step 1/1. Functionally, catalyzes the production of spermine from spermidine and decarboxylated S-adenosylmethionine (dcSAM). The sequence is that of Spermine synthase (SMS) from Bos taurus (Bovine).